Here is a 162-residue protein sequence, read N- to C-terminus: Nucleotide-binding protein ACIAD3137 (162 aa).

Belongs to the YajQ family.

In terms of biological role, nucleotide-binding protein. The sequence is that of Nucleotide-binding protein ACIAD3137 from Acinetobacter baylyi (strain ATCC 33305 / BD413 / ADP1).